We begin with the raw amino-acid sequence, 620 residues long: Pentatricopeptide repeat-containing protein At5g66520 (620 aa).

PPR repeat units lie at residues 79-113, 114-148, 149-179, 180-210, 211-245, 246-280, 281-311, 312-346, 347-382, and 383-413; these read DTFL…SAPH, NAYT…GYEN, DVYA…IPEP, DDVS…MAEK, NAIS…DVEP, DNVS…RIRM, DSVL…IKKK, SVQA…GIKP, NVIT…NLKP, and TIEH…MPLK. The interval 418-493 is type E motif; it reads IWGALLKACR…VPGCSTISLE (76 aa). The segment at 494-524 is type E(+) motif; the sequence is GTTHEFLAGDRSHPEIEKIQSKWRIMRRKLE. Positions 525-620 are type DYW motif; it reads ENGYVPELEE…DGKCSCGDYW (96 aa).

The protein belongs to the PPR family. PCMP-H subfamily.

This chain is Pentatricopeptide repeat-containing protein At5g66520 (PCMP-H61), found in Arabidopsis thaliana (Mouse-ear cress).